Here is a 256-residue protein sequence, read N- to C-terminus: Thiazole synthase (256 aa).

The active-site Schiff-base intermediate with DXP is Lys-96. 1-deoxy-D-xylulose 5-phosphate is bound by residues Gly-157, 183–184 (AG), and 205–206 (NT).

It belongs to the ThiG family. In terms of assembly, homotetramer. Forms heterodimers with either ThiH or ThiS.

Its subcellular location is the cytoplasm. It carries out the reaction [ThiS sulfur-carrier protein]-C-terminal-Gly-aminoethanethioate + 2-iminoacetate + 1-deoxy-D-xylulose 5-phosphate = [ThiS sulfur-carrier protein]-C-terminal Gly-Gly + 2-[(2R,5Z)-2-carboxy-4-methylthiazol-5(2H)-ylidene]ethyl phosphate + 2 H2O + H(+). Its pathway is cofactor biosynthesis; thiamine diphosphate biosynthesis. Its function is as follows. Catalyzes the rearrangement of 1-deoxy-D-xylulose 5-phosphate (DXP) to produce the thiazole phosphate moiety of thiamine. Sulfur is provided by the thiocarboxylate moiety of the carrier protein ThiS. In vitro, sulfur can be provided by H(2)S. In Bacillus cereus (strain AH187), this protein is Thiazole synthase.